Reading from the N-terminus, the 651-residue chain is Acetyl-coenzyme A synthetase (651 aa).

CoA is bound by residues 189 to 192, Thr-311, and Asn-335; that span reads RGGK. Residues 387–389, 411–416, Asp-500, and Arg-515 contribute to the ATP site; these read GEP and DTWWQT. Residue Ser-523 coordinates CoA. Arg-526 provides a ligand contact to ATP. Mg(2+) is bound by residues Val-537, His-539, and Val-542. CoA is bound at residue Arg-586. Lys-611 bears the N6-acetyllysine mark.

Belongs to the ATP-dependent AMP-binding enzyme family. Mg(2+) serves as cofactor. In terms of processing, acetylated. Deacetylation by the SIR2-homolog deacetylase activates the enzyme.

The enzyme catalyses acetate + ATP + CoA = acetyl-CoA + AMP + diphosphate. Catalyzes the conversion of acetate into acetyl-CoA (AcCoA), an essential intermediate at the junction of anabolic and catabolic pathways. AcsA undergoes a two-step reaction. In the first half reaction, AcsA combines acetate with ATP to form acetyl-adenylate (AcAMP) intermediate. In the second half reaction, it can then transfer the acetyl group from AcAMP to the sulfhydryl group of CoA, forming the product AcCoA. The sequence is that of Acetyl-coenzyme A synthetase from Brucella melitensis biotype 1 (strain ATCC 23456 / CCUG 17765 / NCTC 10094 / 16M).